The primary structure comprises 501 residues: Solute carrier family 2, facilitated glucose transporter member 5 (501 aa).

An N-acetylmethionine modification is found at Met1. At 1 to 17 the chain is on the cytoplasmic side; the sequence is MEEKHQEETGELTLVLA. A helical transmembrane segment spans residues 18–38; sequence LATLIAAFGSSFQYGYNVAAV. Tyr31 is a D-fructose binding site. At 39–67 the chain is on the extracellular side; sequence NSPSEFMQQFYNDTYYDRNEENIESFTLT. N-linked (GlcNAc...) asparagine glycosylation is present at Asn50. The chain crosses the membrane as a helical span at residues 68-90; sequence LLWSLTVSMFPFGGFIGSLMVGT. Residues 91 to 97 lie on the Cytoplasmic side of the membrane; the sequence is LVNKLGR. A helical transmembrane segment spans residues 98-118; it reads KGALLFNNIFSILPAILMGCS. The Extracellular portion of the chain corresponds to 119–125; sequence QIAQSFE. A helical membrane pass occupies residues 126–148; that stretch reads LIIISRLLVGICAGISSNVVPMY. At 149-160 the chain is on the cytoplasmic side; the sequence is LGELAPKNLRGA. The helical transmembrane segment at 161 to 181 threads the bilayer; it reads LGVVPQLFITVGILVAQLFGL. Gln166 lines the D-fructose pocket. Residues 182-191 lie on the Extracellular side of the membrane; the sequence is RSLLANEDGW. Residues 192–212 traverse the membrane as a helical segment; sequence PVLLGLTGVPAGLQLLLLPFF. The Cytoplasmic portion of the chain corresponds to 213 to 276; that stretch reads PESPRYLLIQ…LFTMQSLRWQ (64 aa). The helical transmembrane segment at 277-297 threads the bilayer; that stretch reads LISMIVLMAGQQLSGVNAIYY. D-fructose-binding positions include Gln287 and 295 to 297; that span reads IYY. Over 298-312 the chain is Extracellular; the sequence is YADQIYLSAGVKSDD. The helical transmembrane segment at 313–333 threads the bilayer; it reads VQYVTAGTGAVNVFMTILTIF. Residues 334–341 are Cytoplasmic-facing; it reads VVELWGRR. The chain crosses the membrane as a helical span at residues 342 to 362; that stretch reads FLLLVGFSTCLIACLVLTAAL. Over 363–370 the chain is Extracellular; the sequence is ALQNTISW. Residues 371–393 traverse the membrane as a helical segment; sequence MPYISIVCVIVYVIGHALGPSPI. His386 provides a ligand contact to D-fructose. Residues 394–411 lie on the Cytoplasmic side of the membrane; the sequence is PALLITEIFLQSSRPAAY. A helical transmembrane segment spans residues 412-432; sequence MIGGSVHWLSNFTVGLIFPFI. 418–419 provides a ligand contact to D-fructose; the sequence is HW. Residues 433-438 are Extracellular-facing; that stretch reads QMGLGP. The chain crosses the membrane as a helical span at residues 439-459; it reads YSFIIFATICFLTTIYIFMVV. Residues 460–501 are Cytoplasmic-facing; it reads PETKGRTFIEINQIFTMKNKVSDVYPKKEEELGALPHAILEQ.

It belongs to the major facilitator superfamily. Sugar transporter (TC 2.A.1.1) family. Glucose transporter subfamily. In terms of tissue distribution, detected at the apical membrane of villi in the jejunum. Detected in jejunum mucosa. Detected in epididymis and whole testis (at protein level). Detected in small intestine, kidney and testis. Detected in cochlea, but not in inner or outer cochlear hair cells.

It is found in the apical cell membrane. It localises to the cell membrane. The protein resides in the sarcolemma. The enzyme catalyses D-fructose(out) = D-fructose(in). Fructose uptake is inhibited by cytochalasin B. In terms of biological role, functions as a fructose transporter that has only low activity with other monosaccharides. Can mediate the uptake of deoxyglucose, but with low efficiency. Essential for fructose uptake in the small intestine. Plays a role in the regulation of salt uptake and blood pressure in response to dietary fructose. Required for the development of high blood pressure in response to high dietary fructose intake. This Mus musculus (Mouse) protein is Solute carrier family 2, facilitated glucose transporter member 5.